A 360-amino-acid polypeptide reads, in one-letter code: Phospho-N-acetylmuramoyl-pentapeptide-transferase (360 aa).

10 helical membrane passes run 2–22 (IAIL…TPLF), 52–72 (MGGV…NISA), 80–100 (GLLL…DDFI), 114–134 (WKII…LQFP), 156–176 (LAFA…NFLI), 189–209 (LDGL…VVTM), 235–255 (LAIV…WNAS), 259–279 (IFMG…LSIL), 284–304 (FLAV…VIQI), and 338–358 (FWLI…AEWV).

The protein belongs to the glycosyltransferase 4 family. MraY subfamily. Mg(2+) is required as a cofactor.

The protein localises to the cell membrane. It carries out the reaction UDP-N-acetyl-alpha-D-muramoyl-L-alanyl-gamma-D-glutamyl-meso-2,6-diaminopimeloyl-D-alanyl-D-alanine + di-trans,octa-cis-undecaprenyl phosphate = di-trans,octa-cis-undecaprenyl diphospho-N-acetyl-alpha-D-muramoyl-L-alanyl-D-glutamyl-meso-2,6-diaminopimeloyl-D-alanyl-D-alanine + UMP. It functions in the pathway cell wall biogenesis; peptidoglycan biosynthesis. Catalyzes the initial step of the lipid cycle reactions in the biosynthesis of the cell wall peptidoglycan: transfers peptidoglycan precursor phospho-MurNAc-pentapeptide from UDP-MurNAc-pentapeptide onto the lipid carrier undecaprenyl phosphate, yielding undecaprenyl-pyrophosphoryl-MurNAc-pentapeptide, known as lipid I. The protein is Phospho-N-acetylmuramoyl-pentapeptide-transferase of Beutenbergia cavernae (strain ATCC BAA-8 / DSM 12333 / CCUG 43141 / JCM 11478 / NBRC 16432 / NCIMB 13614 / HKI 0122).